The sequence spans 458 residues: Flap endonuclease 1 (458 aa).

Positions 1–105 (MGIKGLTGLL…GVLSKRFEKR (105 aa)) are N-domain. Asp34 contributes to the Mg(2+) binding site. DNA is bound by residues Arg47 and Arg71. 5 residues coordinate Mg(2+): Asp87, Glu159, Glu161, Asp180, and Asp182. The interval 123–254 (DVDRFSRRTV…KSALKLIREF (132 aa)) is I-domain. A DNA-binding site is contributed by Glu159. 2 residues coordinate DNA: Gly232 and Asp234. A Mg(2+)-binding site is contributed by Asp234. Disordered stretches follow at residues 268–347 (AAAR…IPDE) and 416–458 (GFFT…AKKK). 2 stretches are compositionally biased toward acidic residues: residues 275–285 (AEEEDEEEAEE) and 293–309 (EMPD…DEEE). The segment covering 310-329 (AERRKKAEAAKKKKAQEKAK) has biased composition (basic and acidic residues). Residues 410–418 (QQGRLDGFF) form an interaction with PCNA region. Positions 442–452 (RKGEDKAEGSG) are enriched in basic and acidic residues.

This sequence belongs to the XPG/RAD2 endonuclease family. FEN1 subfamily. Interacts with PCNA. Three molecules of FEN1 bind to one PCNA trimer with each molecule binding to one PCNA monomer. PCNA stimulates the nuclease activity without altering cleavage specificity. It depends on Mg(2+) as a cofactor. In terms of processing, phosphorylated. Phosphorylation upon DNA damage induces relocalization to the nuclear plasma.

The protein resides in the nucleus. Its subcellular location is the nucleolus. It is found in the nucleoplasm. It localises to the mitochondrion. Functionally, structure-specific nuclease with 5'-flap endonuclease and 5'-3' exonuclease activities involved in DNA replication and repair. During DNA replication, cleaves the 5'-overhanging flap structure that is generated by displacement synthesis when DNA polymerase encounters the 5'-end of a downstream Okazaki fragment. It enters the flap from the 5'-end and then tracks to cleave the flap base, leaving a nick for ligation. Also involved in the long patch base excision repair (LP-BER) pathway, by cleaving within the apurinic/apyrimidinic (AP) site-terminated flap. Acts as a genome stabilization factor that prevents flaps from equilibrating into structures that lead to duplications and deletions. Also possesses 5'-3' exonuclease activity on nicked or gapped double-stranded DNA, and exhibits RNase H activity. Also involved in replication and repair of rDNA and in repairing mitochondrial DNA. This Coprinopsis cinerea (strain Okayama-7 / 130 / ATCC MYA-4618 / FGSC 9003) (Inky cap fungus) protein is Flap endonuclease 1.